Consider the following 271-residue polypeptide: Formamidopyrimidine-DNA glycosylase (271 aa).

The active-site Schiff-base intermediate with DNA is Pro-2. Glu-3 (proton donor) is an active-site residue. Lys-58 acts as the Proton donor; for beta-elimination activity in catalysis. Residues His-92, Arg-111, and Lys-152 each contribute to the DNA site. The segment at 237–271 (YVYGKVQKPCKICNNIITLIRQNGRSTYFCNACQN) adopts an FPG-type zinc-finger fold. Catalysis depends on Arg-261, which acts as the Proton donor; for delta-elimination activity.

The protein belongs to the FPG family. Monomer. Zn(2+) is required as a cofactor.

It carries out the reaction Hydrolysis of DNA containing ring-opened 7-methylguanine residues, releasing 2,6-diamino-4-hydroxy-5-(N-methyl)formamidopyrimidine.. The enzyme catalyses 2'-deoxyribonucleotide-(2'-deoxyribose 5'-phosphate)-2'-deoxyribonucleotide-DNA = a 3'-end 2'-deoxyribonucleotide-(2,3-dehydro-2,3-deoxyribose 5'-phosphate)-DNA + a 5'-end 5'-phospho-2'-deoxyribonucleoside-DNA + H(+). Functionally, involved in base excision repair of DNA damaged by oxidation or by mutagenic agents. Acts as a DNA glycosylase that recognizes and removes damaged bases. Has a preference for oxidized purines, such as 7,8-dihydro-8-oxoguanine (8-oxoG). Has AP (apurinic/apyrimidinic) lyase activity and introduces nicks in the DNA strand. Cleaves the DNA backbone by beta-delta elimination to generate a single-strand break at the site of the removed base with both 3'- and 5'-phosphates. This Wolbachia pipientis wMel protein is Formamidopyrimidine-DNA glycosylase.